The primary structure comprises 458 residues: tRNA modification GTPase MnmE (458 aa).

The (6S)-5-formyl-5,6,7,8-tetrahydrofolate site is built by Arg-26, Glu-88, and Arg-127. In terms of domain architecture, TrmE-type G spans 224–378 (GLSTAIIGRP…IEDRINQLFF (155 aa)). A K(+)-binding site is contributed by Asn-234. Residues 234–239 (NVGKSS), 253–259 (TDIAGTT), and 278–281 (DTAG) contribute to the GTP site. Position 238 (Ser-238) interacts with Mg(2+). K(+)-binding residues include Thr-253, Ile-255, and Thr-258. Mg(2+) is bound at residue Thr-259. Lys-458 serves as a coordination point for (6S)-5-formyl-5,6,7,8-tetrahydrofolate.

The protein belongs to the TRAFAC class TrmE-Era-EngA-EngB-Septin-like GTPase superfamily. TrmE GTPase family. In terms of assembly, homodimer. Heterotetramer of two MnmE and two MnmG subunits. The cofactor is K(+).

Its subcellular location is the cytoplasm. Its function is as follows. Exhibits a very high intrinsic GTPase hydrolysis rate. Involved in the addition of a carboxymethylaminomethyl (cmnm) group at the wobble position (U34) of certain tRNAs, forming tRNA-cmnm(5)s(2)U34. This is tRNA modification GTPase MnmE from Streptococcus pyogenes serotype M18 (strain MGAS8232).